Reading from the N-terminus, the 150-residue chain is C-type lectin 37Db (150 aa).

The first 20 residues, 1–20 (MMVKLLLLFLVCWSALPLES), serve as a signal peptide directing secretion. A C-type lectin domain is found at 31–148 (IGEKQYYISL…CYSSVAFICQ (118 aa)). 2 disulfides stabilise this stretch: C52/C147 and C122/C139. N-linked (GlcNAc...) asparagine glycosylation is found at N107 and N115.

It localises to the secreted. Galactose-specific lectin that displays calcium-dependent activity. Binds to the surface of hemocytes and enhances hemocyte encapsulation and melanization. This is likely by interacting with carbohydrates on the surface of the hemocytes. Also displays agglutination activity against the Gram-negative bacterium E.coli. The protein is C-type lectin 37Db of Drosophila melanogaster (Fruit fly).